The following is a 250-amino-acid chain: 2,5-dichloro-2,5-cyclohexadiene-1,4-diol dehydrogenase (250 aa).

I9–A34 contributes to the NAD(+) binding site. Residue S141 participates in substrate binding. Y154 functions as the Proton acceptor in the catalytic mechanism.

The protein belongs to the short-chain dehydrogenases/reductases (SDR) family.

It carries out the reaction 2,5-dichlorocyclohexa-2,5-dien-1,4-diol + NAD(+) = 2,5-dichlorohydroquinone + NADH + H(+). The protein operates within xenobiotic degradation; gamma-hexachlorocyclohexane degradation. In terms of biological role, catalyzes the dehydrogenation of 2,5-dichloro-2,5-cyclohexadiene-1,4-diol (2,5-DDOL) to 2,5-dichlorohydroquinone (2,5-DCHQ), a step in the degradation of gamma-hexachlorocyclohexane (gamma-HCH or lindane). Has an essential role in this assimilation pathway that allows S.japonicum UT26 to grow on gamma-HCH as the sole source of carbon and energy. The sequence is that of 2,5-dichloro-2,5-cyclohexadiene-1,4-diol dehydrogenase from Sphingobium indicum (strain DSM 16413 / CCM 7287 / MTCC 6362 / UT26 / NBRC 101211 / UT26S) (Sphingobium japonicum).